The sequence spans 96 residues: Putative septation protein SpoVG (96 aa).

This sequence belongs to the SpoVG family.

In terms of biological role, could be involved in septation. This Geobacillus sp. (strain WCH70) protein is Putative septation protein SpoVG.